The sequence spans 273 residues: MPEMPEVENVRATLQELVPGKKIDQVIVRVPKMIVSTPPDEFVHMLVGQEIEGVRRRGKFLLFDLTNCTILSHLRMEGKFRLMDENEEVSKHTHIIFHFEDHTELRFLDVRKFGTMEVTNKYGEGETRSIKKLGPEPLTQAFTLTDFATGVKKTSRAIKTALLDQKLVAGVGNIYADEICFEAKVRPERAANSLSDKEIKRIFKATKSIMTEAVALGGSTVRTYVNSQGKLGQYQNKLKVYGKTDEPCVVCGTPIEKIKLNGRGTHFCPNCQK.

Proline 2 functions as the Schiff-base intermediate with DNA in the catalytic mechanism. The active-site Proton donor is glutamate 3. Lysine 59 serves as the catalytic Proton donor; for beta-elimination activity. DNA is bound by residues histidine 92 and arginine 111. Residues 239 to 273 form an FPG-type zinc finger; that stretch reads KVYGKTDEPCVVCGTPIEKIKLNGRGTHFCPNCQK. The Proton donor; for delta-elimination activity role is filled by arginine 263.

Belongs to the FPG family. Monomer. The cofactor is Zn(2+).

It catalyses the reaction Hydrolysis of DNA containing ring-opened 7-methylguanine residues, releasing 2,6-diamino-4-hydroxy-5-(N-methyl)formamidopyrimidine.. The catalysed reaction is 2'-deoxyribonucleotide-(2'-deoxyribose 5'-phosphate)-2'-deoxyribonucleotide-DNA = a 3'-end 2'-deoxyribonucleotide-(2,3-dehydro-2,3-deoxyribose 5'-phosphate)-DNA + a 5'-end 5'-phospho-2'-deoxyribonucleoside-DNA + H(+). Its function is as follows. Involved in base excision repair of DNA damaged by oxidation or by mutagenic agents. Acts as a DNA glycosylase that recognizes and removes damaged bases. Has a preference for oxidized purines, such as 7,8-dihydro-8-oxoguanine (8-oxoG). Has AP (apurinic/apyrimidinic) lyase activity and introduces nicks in the DNA strand. Cleaves the DNA backbone by beta-delta elimination to generate a single-strand break at the site of the removed base with both 3'- and 5'-phosphates. The polypeptide is Formamidopyrimidine-DNA glycosylase (Listeria monocytogenes serovar 1/2a (strain ATCC BAA-679 / EGD-e)).